Consider the following 296-residue polypeptide: 4-diphosphocytidyl-2-C-methyl-D-erythritol kinase (296 aa).

The active site involves K22. 105–115 (PMGGGLGGGSS) provides a ligand contact to ATP. D147 is an active-site residue.

The protein belongs to the GHMP kinase family. IspE subfamily.

The enzyme catalyses 4-CDP-2-C-methyl-D-erythritol + ATP = 4-CDP-2-C-methyl-D-erythritol 2-phosphate + ADP + H(+). It functions in the pathway isoprenoid biosynthesis; isopentenyl diphosphate biosynthesis via DXP pathway; isopentenyl diphosphate from 1-deoxy-D-xylulose 5-phosphate: step 3/6. Functionally, catalyzes the phosphorylation of the position 2 hydroxy group of 4-diphosphocytidyl-2C-methyl-D-erythritol. The sequence is that of 4-diphosphocytidyl-2-C-methyl-D-erythritol kinase from Photobacterium profundum (strain SS9).